A 277-amino-acid polypeptide reads, in one-letter code: MAETLKEDSIMIREVWDYNLVEEFALIREIVDKFSYIAMDTEFPGVVLKPVATFKYNNDLNYRTLKENVDLLKLIQVGLTFSDENGNLPTCGTDKFCIWQFNFREFNIGEDIYASESIELLRQCGIDFKKNIEKGIDVVRFGELMMSSGIVLNDAISWVTFHGGYDFGYLVKLLTCKELPLKQADFFKLLYVYFPTVYDIKHLMTFCNGLFGGLNRLAELMGVERVGICHQAGSDSLLTLGSFRKLKERYFPGSTEKYTGVLYGLGVEDGTTTTVAN.

Positions 40, 42, 166, and 235 each coordinate a divalent metal cation.

This sequence belongs to the CAF1 family. In terms of assembly, component of the CCR4-NOT complex, at least composed of CRR4 and CAF1 proteins. The cofactor is a divalent metal cation.

It is found in the nucleus. The protein resides in the cytoplasm. It catalyses the reaction Exonucleolytic cleavage of poly(A) to 5'-AMP.. Functionally, ubiquitous transcription factor required for a diverse set of processes. It is a component of the CCR4 complex involved in the control of gene expression. In Arabidopsis thaliana (Mouse-ear cress), this protein is Probable CCR4-associated factor 1 homolog 10 (CAF1-10).